The following is a 502-amino-acid chain: Facilitated trehalose transporter Tret1 (502 aa).

The Cytoplasmic segment spans residues 1–38 (MGVENTKQTMSSQNIKPAKDSDDVLHTQFKEVKRSPMR). The helical transmembrane segment at 39 to 59 (YTMQLLAALAVSMASLMIGYS) threads the bilayer. At 60–83 (SSYTSPALVSMRDNTTATFEVTMD) the chain is on the extracellular side. N-linked (GlcNAc...) asparagine glycosylation is present at Asn-73. Residues 84 to 104 (MAMWIGSIMPLSALIGGIIGG) traverse the membrane as a helical segment. The Cytoplasmic portion of the chain corresponds to 105–120 (PCIEYIGRRNTILSTA). A helical membrane pass occupies residues 121 to 141 (LPFLAGWLFIALATNVAMILV). The Extracellular segment spans residues 142–144 (GRS). A helical membrane pass occupies residues 145–165 (ICGFCVGVASLSLPVYLGESI). Over 166–172 (QPEVRGS) the chain is Cytoplasmic. The chain crosses the membrane as a helical span at residues 173–193 (LGLLPTVFGNSGILMCFTAGM). At 194–199 (YLAWRN) the chain is on the extracellular side. The helical transmembrane segment at 200–220 (LALLGACIPIIFLILMFLIPE) threads the bilayer. Over 221–282 (TPRWYISKGK…ELFRKNHIKP (62 aa)) the chain is Cytoplasmic. The chain crosses the membrane as a helical span at residues 283–303 (VFISLGLMFFQQFSGINAVIF). Residues 304–319 (YTVQIFKDSGSTVDEN) are Extracellular-facing. The N-linked (GlcNAc...) asparagine glycan is linked to Asn-319. A helical membrane pass occupies residues 320–340 (LSTIIVGLVNFISTFVAAMII). Residues 341 to 346 (DRLGRK) lie on the Cytoplasmic side of the membrane. Residues 347-367 (MLLYISSILMCITLFTFGTFF) form a helical membrane-spanning segment. Residues 368-376 (YVKELMDVT) lie on the Extracellular side of the membrane. The chain crosses the membrane as a helical span at residues 377–397 (AFGWIPLMSLIVYVIGFSFGF). Residues 398 to 410 (GPIPWLMMGEILP) are Cytoplasmic-facing. The chain crosses the membrane as a helical span at residues 411 to 433 (VKIRGTAASVATAFNWSCTFVVT). Residues 434–446 (KTYEDLVLHIGPY) are Extracellular-facing. A helical membrane pass occupies residues 447-467 (GTFWLFGTLVAVAFIFVIICV). At 468–502 (PETRGRSLEEIERRFAGPVRRTSAIANLKPMPITI) the chain is on the cytoplasmic side.

This sequence belongs to the major facilitator superfamily. Sugar transporter (TC 2.A.1.1) family. Trehalose transporter subfamily.

The protein localises to the cell membrane. Its function is as follows. Moderate-capacity facilitative transporter for trehalose. Does not transport maltose, sucrose or lactose. Mediates the bidirectional transfer of trehalose. Responsible for the transport of trehalose synthesized in the fat body and the incorporation of trehalose into other tissues that require a carbon source, thereby regulating trehalose levels in the hemolymph. This chain is Facilitated trehalose transporter Tret1, found in Apis mellifera ligustica (Common honeybee).